A 407-amino-acid chain; its full sequence is uncharacterized protein (407 aa).

The next 11 helical transmembrane spans lie at isoleucine 13 to leucine 30, valine 40 to leucine 62, isoleucine 67 to isoleucine 89, leucine 118 to glycine 140, valine 147 to leucine 169, alanine 179 to tyrosine 199, tryptophan 253 to valine 271, threonine 281 to leucine 303, glycine 334 to alanine 356, alanine 361 to phenylalanine 378, and glutamine 385 to phenylalanine 402.

The protein localises to the cell membrane. This is an uncharacterized protein from Aquifex aeolicus (strain VF5).